Reading from the N-terminus, the 142-residue chain is Secreted RxLR effector protein 161 (142 aa).

Positions 1–27 (MKNVPYLSAVGAIMYLMVVTRPDLAAA) are cleaved as a signal peptide. Positions 48-51 (RVLR) match the RxLR motif.

Belongs to the RxLR effector family.

Its subcellular location is the secreted. It localises to the host chloroplast envelope. The protein localises to the host nucleus. Its function is as follows. Secreted effector that completely suppresses the host cell death induced by cell death-inducing proteins. This Plasmopara viticola (Downy mildew of grapevine) protein is Secreted RxLR effector protein 161.